The following is a 289-amino-acid chain: Polyamine aminopropyltransferase (289 aa).

The region spanning 5-245 (PGPITLIEPL…YAVNFILGSL (241 aa)) is the PABS domain. Gln-36 is a binding site for S-methyl-5'-thioadenosine. Spermidine contacts are provided by His-67 and Glu-91. S-methyl-5'-thioadenosine-binding positions include Asp-111 and 143 to 144 (DG). The Proton acceptor role is filled by Asp-164.

It belongs to the spermidine/spermine synthase family. Homodimer or homotetramer.

The protein resides in the cytoplasm. The catalysed reaction is S-adenosyl 3-(methylsulfanyl)propylamine + putrescine = S-methyl-5'-thioadenosine + spermidine + H(+). The protein operates within amine and polyamine biosynthesis; spermidine biosynthesis; spermidine from putrescine: step 1/1. Its function is as follows. Catalyzes the irreversible transfer of a propylamine group from the amino donor S-adenosylmethioninamine (decarboxy-AdoMet) to putrescine (1,4-diaminobutane) to yield spermidine. The protein is Polyamine aminopropyltransferase of Pyrobaculum calidifontis (strain DSM 21063 / JCM 11548 / VA1).